A 918-amino-acid polypeptide reads, in one-letter code: Melanoma-associated antigen E1 (918 aa).

3 disordered regions span residues 1–140 (MSLV…GSKA), 154–227 (EQRH…SNGL), and 367–388 (SQMS…ANNP). A compositionally biased stretch (basic residues) spans 8 to 23 (SRRRRGGRANARRNNG). Composition is skewed to polar residues over residues 70-96 (VPPT…SEMP), 113-126 (GLNT…SEGP), and 213-227 (EDPS…SNGL). MAGE domains lie at 459 to 658 (MEQN…YNEA) and 706 to 897 (LESK…YREA). Residues 704-918 (SRLESKARKL…RRPLIVRNLR (215 aa)) are interaction with DTNA.

Interacts with DTNA. Interacts with TRIM28. As to expression, expressed in cell bodies and dendrites of hippocampal and Purkinje neurons. Also expressed in peripheral nerve, where it localizes to the perineurium and myelin (at protein level). Predominantly expressed in brain and at low levels in the heart, liver, kidney, spleen, testis, lung, thymus, placenta and skeletal muscle.

It is found in the cytoplasm. It localises to the perinuclear region. The protein resides in the nucleus. The protein localises to the cell membrane. In terms of biological role, may enhance ubiquitin ligase activity of RING-type zinc finger-containing E3 ubiquitin-protein ligases. Proposed to act through recruitment and/or stabilization of the Ubl-conjugating enzyme (E2) at the E3:substrate complex. This chain is Melanoma-associated antigen E1 (Magee1), found in Mus musculus (Mouse).